A 1379-amino-acid polypeptide reads, in one-letter code: ATPase histone chaperone YTA7 (1379 aa).

Disordered regions lie at residues 1 to 39 (MARN…TTTR) and 54 to 243 (DFLE…NSRN). The residue at position 2 (Ala-2) is an N-acetylalanine. Phosphoserine is present on residues Ser-11 and Ser-17. Basic and acidic residues predominate over residues 61-78 (VMDKDETPVDVTSDEHHN). Ser-94 carries the phosphoserine modification. Residues 97–110 (ENARTNEELTNERN) show a composition bias toward basic and acidic residues. Acidic residues-rich tracts occupy residues 119 to 152 (PEED…DEDS) and 170 to 184 (DPDD…DEEG). Basic residues predominate over residues 192 to 207 (SSKRLKRANSRRTRSS). Phosphothreonine is present on Thr-212. A compositionally biased stretch (basic residues) spans 218-228 (RALRSRTRHSR). Thr-229 bears the Phosphothreonine mark. Phosphoserine is present on residues Ser-241, Ser-259, and Ser-285. The segment at 302 to 330 (NPSPARRGRGGWNASQNSGPTRRLFPTGG) is disordered. Ser-367, Ser-369, and Ser-370 each carry phosphoserine. The tract at residues 375 to 396 (LPLGVTPKTKKENTQKKKKKKP) is disordered. Residues 450–578 (VLFHGPPGTG…PALRRPGRFD (129 aa)) are AAA-ATPase; required for its chromatin boundary function. Residue 454-461 (GPPGTGKT) participates in ATP binding. At Ser-735 the chain carries Phosphoserine. The 128-residue stretch at 974 to 1101 (RLKNVLKIKL…ANAQMGIEEI (128 aa)) folds into the Bromo domain. Ser-1142 carries the phosphoserine modification. Disordered stretches follow at residues 1233-1274 (TCTS…ANTN) and 1291-1316 (LHET…GKKS). Basic and acidic residues predominate over residues 1244–1254 (ERARKEPKENE). Ser-1256 carries the post-translational modification Phosphoserine. Residues 1256-1274 (SLQTQVTEENFSKIDANTN) are compositionally biased toward polar residues. Residues 1293–1316 (ETVEKRERSPIPKEVVEPEQGKKS) show a composition bias toward basic and acidic residues.

This sequence belongs to the AAA ATPase family. In terms of assembly, interacts with CSE4/CENP-A. Interacts with SCM3. Interacts with SPT16. Interacts with POB3. Interacts with the casein kinase II complex subunits CKA1, CKA2, CKB1 and CKB2. Interacts with RNA polymerase II. Interacts (via Bromo domain) with histone H3. Interacts (via Bromo domain) with histone H4. Post-translationally, phosphorylated by CDK1 and casein kinase II during S-phase, which leads to its eviction from histone gene promoters and promotes histone gene transcription.

The protein localises to the chromosome. Its subcellular location is the centromere. It localises to the nucleus. Functionally, functions as an ATP-dependent nucleosome disassembly factor that helps evict canonical histone H3 from the 5'-end of genes upon their induction. Also contributes to kinetochore assembly by cooperating with SCM3 to load the histone H3 variant CSE4/CENP-A at centromeres. Provides a chromatin boundary function at the 5'-end of genes that restricts access by RTT106 and thus prevents ectopic spreading of repressive chromatin into coding regions. Also prevents heterochromatin spreading downstream of the silent mating-type locus HMR, this function is independent of the tRNA boundary element. Contributes to appropriate cell cycle regulation of histone gene expression by recruiting RNA polymerase II to histone genes, and subsequent CDK1- and casein kinase II-dependent eviction from chromatin is required to promote transcriptional elongation. This is ATPase histone chaperone YTA7 from Saccharomyces cerevisiae (strain ATCC 204508 / S288c) (Baker's yeast).